The sequence spans 389 residues: MASYSLVESNSFGSENWCLKLQPSYKHGLLTGLSNGEIRLLDWSTGKSVQKIKASETAINDMKVIGSDFSAGHLVSSASIDAVKVFDIRTNDRIAQIQNEANSPFISLDSRHGLLACGTELQGIDAAVYIYDIRKWDTPLRSLIDSHHDDVTCIKFHPSDVNILLSGSTDGYTNIYDLKQDEEEDALHQVINYASIHSCGWLSPKRIFTLSHMETFAIHELNDKSDELKEPQPLDFGDVREIWNCDYVVDIYPGLIATGKTQENCGELCLLPFKDEKVDTENGIVIPHAHGDEVVRDIFIPAQHSNMLYSCGEDGCVKIWENKQGPLDIPENFWDYSKKMNVLGDDDREGSINLDEPLIIQKESVSTRPRKEKHKKAKKHSMKSRFKPY.

WD repeat units follow at residues Ser11–Lys53, Ser146–Ala186, and Ala289–Pro330. Residue Ser351 is modified to Phosphoserine. The tract at residues Gln361–Tyr389 is disordered. The segment covering Arg368–Tyr389 has biased composition (basic residues).

This is an uncharacterized protein from Saccharomyces cerevisiae (strain ATCC 204508 / S288c) (Baker's yeast).